We begin with the raw amino-acid sequence, 256 residues long: Probable enoyl-CoA hydratase echA14 (256 aa).

Residues 235-256 (GPQAKSVQSPEFAARLAAAQHR) are disordered.

The protein belongs to the enoyl-CoA hydratase/isomerase family.

The enzyme catalyses a (3S)-3-hydroxyacyl-CoA = a (2E)-enoyl-CoA + H2O. It carries out the reaction a 4-saturated-(3S)-3-hydroxyacyl-CoA = a (3E)-enoyl-CoA + H2O. Functionally, could possibly oxidize fatty acids using specific components. The protein is Probable enoyl-CoA hydratase echA14 (echA14) of Mycobacterium tuberculosis (strain CDC 1551 / Oshkosh).